Reading from the N-terminus, the 709-residue chain is Protein SOSEKI 3 (709 aa).

The segment at Ser8–Asp101 is DIX-like oligomerization domain. 5 disordered regions span residues Leu242 to Met266, Arg315 to Ser344, Gly358 to Cys393, Pro411 to Ser439, and Asp506 to Pro560. Basic and acidic residues predominate over residues Glu329–Glu342. Over residues Asn417–Asn436 the composition is skewed to basic and acidic residues. Polar residues predominate over residues Val529–Pro544. A C2HC/C3H-type zinc finger spans residues Ile663–Ala692. Positions 667, 670, 682, and 686 each coordinate Zn(2+).

It belongs to the SOSEKI family. Homodimer. Forms long polymer filaments with other SOKs proteins polymers crucial for polar localization and biological activity. Zn(2+) is required as a cofactor.

The protein resides in the cell membrane. Its function is as follows. SOSEKI proteins locally interpret global polarity cues and can influence cell division orientation to coordinate cell polarization relative to body axes. This Physcomitrium patens (Spreading-leaved earth moss) protein is Protein SOSEKI 3.